The following is a 407-amino-acid chain: Peptidase T (407 aa).

Residue histidine 81 participates in Zn(2+) binding. The active site involves aspartate 83. Aspartate 142 lines the Zn(2+) pocket. Residue glutamate 176 is the Proton acceptor of the active site. 3 residues coordinate Zn(2+): glutamate 177, aspartate 199, and histidine 381.

Belongs to the peptidase M20B family. Zn(2+) is required as a cofactor.

Its subcellular location is the cytoplasm. The catalysed reaction is Release of the N-terminal residue from a tripeptide.. Functionally, cleaves the N-terminal amino acid of tripeptides. The chain is Peptidase T from Streptococcus pneumoniae (strain ATCC 700669 / Spain 23F-1).